Reading from the N-terminus, the 271-residue chain is Interleukin-1 alpha (271 aa).

The propeptide occupies 1 to 112 (MAKVPDMFED…DSEEEIIKPR (112 aa)). K82 carries the N6-acetyllysine modification. The nuclear localization signal (NLS) stretch occupies residues 82–86 (KKRRL). S87 is modified (phosphoserine). N-linked (GlcNAc...) asparagine glycosylation is found at N102, N121, N137, N141, and N211.

The protein belongs to the IL-1 family. Monomer. Interacts with TMED10; the interaction mediates the translocation from the cytoplasm into the ERGIC (endoplasmic reticulum-Golgi intermediate compartment) and thereby secretion. Interacts with IL1R1. Interacts with S100A13; this interaction is the first step in the export of IL1A, followed by direct translocation of this complex across the plasma membrane. Post-translationally, acetylated within its nuclear localization sequence, which impacts subcellular localization. In terms of processing, proteolytic processed by CAPN1 in a calcium-dependent manner. Cleavage from 31 kDa precursor to 18 kDa biologically active molecules. Phosphorylated. Phosphorylation greatly enhances susceptibility to digestion and promotes the conversion of pre-IL1A alpha to the biologically active IL1A.

The protein localises to the nucleus. It is found in the cytoplasm. The protein resides in the secreted. Cytokine constitutively present intracellularly in nearly all resting non-hematopoietic cells that plays an important role in inflammation and bridges the innate and adaptive immune systems. After binding to its receptor IL1R1 together with its accessory protein IL1RAP, forms the high affinity interleukin-1 receptor complex. Signaling involves the recruitment of adapter molecules such as MYD88, IRAK1 or IRAK4. In turn, mediates the activation of NF-kappa-B and the three MAPK pathways p38, p42/p44 and JNK pathways. Within the cell, acts as an alarmin and cell death results in its liberation in the extracellular space after disruption of the cell membrane to induce inflammation and alert the host to injury or damage. In addition to its role as a danger signal, which occurs when the cytokine is passively released by cell necrosis, directly senses DNA damage and acts as signal for genotoxic stress without loss of cell integrity. The chain is Interleukin-1 alpha (IL1A) from Macaca mulatta (Rhesus macaque).